We begin with the raw amino-acid sequence, 316 residues long: MSELVVFKANELAISRYDLTEHETKLILCCVALLNPTIENPTRKERTVSFTYNQYAQMMNISRENAYGVLAKATRELMTRTVEIRNPLVKGFEIFQWTNYAKFSSEKLELVFSEEILPYLFQLKKFIKYNLEHVKSFENKYSMRIYEWLLKELTQKKTHKANIEISLDEFKFMLMLENNYHEFKRLNQWVLKPISKDLNTYSNMKLVVDKRGRPTDTLIFQVELDRQMDLVTELENNQIKMNGDKIPTTITSDSYLHNGLRKTLHDALTAKIQLTSFEAKFLSDMQSKYDLNGSFSWLTQKQRTTLENILAKYGRI.

It belongs to the initiator RepB protein family.

The protein is Replication initiation protein (repA) of Escherichia coli.